The following is a 128-amino-acid chain: MSRSLGIPVKLLHESSGHIVSVEMKSGELYRGSMIECEDNWNCQLENITYTAKDGKVSQLEHVFIRGSLVRFLVIPDMLKNAPMFKDVRGKGKSASLGVGRGRGAAMRAKGTGRGTGGGRGAVPPVRR.

One can recognise a Sm domain in the interval 7–79; sequence IPVKLLHESS…VRFLVIPDML (73 aa). Residues 90–128 form a disordered region; that stretch reads GKGKSASLGVGRGRGAAMRAKGTGRGTGGGRGAVPPVRR. A compositionally biased stretch (gly residues) spans 112-121; the sequence is TGRGTGGGRG.

This sequence belongs to the snRNP core protein family. Expressed in young seedlings, roots, leaves, flowers and immature siliques.

The protein localises to the cytoplasm. It is found in the cytosol. Its subcellular location is the nucleus. Its function is as follows. Core component of the spliceosomal U1, U2, U4 and U5 small nuclear ribonucleoproteins (snRNPs), the building blocks of the spliceosome. May play a minor role in the splicing of cellular pre-mRNAs. The sequence is that of Small nuclear ribonucleoprotein SmD3a from Arabidopsis thaliana (Mouse-ear cress).